A 494-amino-acid polypeptide reads, in one-letter code: Nuclear distribution protein PAC1 (494 aa).

The region spanning 14–46 (QKNELDKSVLRYLNWNYKQTVRHEHAQDYESVR) is the LisH domain. Residues 90–123 (NSIVRLQKKIIELEQNTETLVSQIKDLNTQVSEL) are a coiled coil. WD repeat units follow at residues 153–192 (NVES…IPLA), 196–244 (SHTK…CKFQ), 251–292 (GHEH…SLKT), 295–334 (PHSQ…SVGT), 347–395 (HFIE…LMAH), 415–454 (GHLS…HVWE), and 457–492 (HTGF…SNVF).

This sequence belongs to the WD repeat LIS1/nudF family. Self-associates. Interacts with NDL1 and dynein.

The protein resides in the cytoplasm. The protein localises to the cytoskeleton. It localises to the spindle pole. Functionally, positively regulates the activity of the minus-end directed microtubule motor protein dynein. Plays a central role in positioning the mitotic spindle at the bud neck during cell division. Targets cytoplasmic dynein to microtubule plus ends, thereby promoting dynein-mediated microtubule sliding along the bud cortex and consequently the movement of the mitotic spindle to the bud neck. This chain is Nuclear distribution protein PAC1, found in Saccharomyces cerevisiae (strain JAY291) (Baker's yeast).